The sequence spans 428 residues: 3-phosphoshikimate 1-carboxyvinyltransferase (428 aa).

3-phosphoshikimate is bound by residues lysine 21, serine 22, and arginine 26. Lysine 21 is a phosphoenolpyruvate binding site. Phosphoenolpyruvate contacts are provided by glycine 91 and arginine 119. Positions 164, 166, 313, and 340 each coordinate 3-phosphoshikimate. Glutamine 166 is a binding site for phosphoenolpyruvate. Aspartate 313 (proton acceptor) is an active-site residue. Residues arginine 344 and arginine 386 each contribute to the phosphoenolpyruvate site.

Belongs to the EPSP synthase family. Monomer.

It is found in the cytoplasm. It catalyses the reaction 3-phosphoshikimate + phosphoenolpyruvate = 5-O-(1-carboxyvinyl)-3-phosphoshikimate + phosphate. It participates in metabolic intermediate biosynthesis; chorismate biosynthesis; chorismate from D-erythrose 4-phosphate and phosphoenolpyruvate: step 6/7. Catalyzes the transfer of the enolpyruvyl moiety of phosphoenolpyruvate (PEP) to the 5-hydroxyl of shikimate-3-phosphate (S3P) to produce enolpyruvyl shikimate-3-phosphate and inorganic phosphate. The protein is 3-phosphoshikimate 1-carboxyvinyltransferase of Campylobacter jejuni subsp. jejuni serotype O:2 (strain ATCC 700819 / NCTC 11168).